The sequence spans 285 residues: Steroidogenic acute regulatory protein, mitochondrial (285 aa).

Residues 1–63 constitute a mitochondrion transit peptide; it reads MLLATFKLCA…RRGSLLGSQL (63 aa). S57 and S195 each carry phosphoserine; by PKA. Positions 67 to 280 constitute an START domain; sequence LYSDQELAYI…LRKRLESCPA (214 aa).

In terms of assembly, may interact with TSPO.

Its subcellular location is the mitochondrion. The catalysed reaction is cholesterol(in) = cholesterol(out). It participates in steroid metabolism; cholesterol metabolism. Plays a key role in steroid hormone synthesis by enhancing the metabolism of cholesterol into pregnenolone. Mediates the transfer of cholesterol from the outer mitochondrial membrane to the inner mitochondrial membrane where it is cleaved to pregnenolone. This is Steroidogenic acute regulatory protein, mitochondrial (STAR) from Ovis aries (Sheep).